Reading from the N-terminus, the 146-residue chain is Snaclec mamushigin subunit beta (146 aa).

The signal sequence occupies residues 1–23; sequence MGRFIFLSFGLLVVFVSLSGTGA. Disulfide bonds link cysteine 25–cysteine 36, cysteine 53–cysteine 142, and cysteine 119–cysteine 134. A C-type lectin domain is found at 32 to 143; sequence YEGHCYRVFQ…CSRTYNVVCK (112 aa).

As to quaternary structure, heterodimer of subunits alpha and beta; disulfide-linked. In terms of tissue distribution, expressed by the venom gland.

Its subcellular location is the secreted. In terms of biological role, binds to platelet GPIbalpha (GP1BA) and enhances platelet aggregation at low-shear stress. At high-shear stress, blocks platelet aggregation in a dose-dependent manner. This Gloydius blomhoffii (Mamushi) protein is Snaclec mamushigin subunit beta.